Reading from the N-terminus, the 121-residue chain is Large ribosomal subunit protein bL12 (121 aa).

This sequence belongs to the bacterial ribosomal protein bL12 family. In terms of assembly, homodimer. Part of the ribosomal stalk of the 50S ribosomal subunit. Forms a multimeric L10(L12)X complex, where L10 forms an elongated spine to which 2 to 4 L12 dimers bind in a sequential fashion. Binds GTP-bound translation factors.

Forms part of the ribosomal stalk which helps the ribosome interact with GTP-bound translation factors. Is thus essential for accurate translation. This is Large ribosomal subunit protein bL12 from Xanthomonas axonopodis pv. citri (strain 306).